Here is a 158-residue protein sequence, read N- to C-terminus: S-ribosylhomocysteine lyase (158 aa).

Positions 56, 60, and 125 each coordinate Fe cation.

Belongs to the LuxS family. Homodimer. Fe cation is required as a cofactor.

The enzyme catalyses S-(5-deoxy-D-ribos-5-yl)-L-homocysteine = (S)-4,5-dihydroxypentane-2,3-dione + L-homocysteine. Its function is as follows. Involved in the synthesis of autoinducer 2 (AI-2) which is secreted by bacteria and is used to communicate both the cell density and the metabolic potential of the environment. The regulation of gene expression in response to changes in cell density is called quorum sensing. Catalyzes the transformation of S-ribosylhomocysteine (RHC) to homocysteine (HC) and 4,5-dihydroxy-2,3-pentadione (DPD). This chain is S-ribosylhomocysteine lyase, found in Leuconostoc citreum (strain KM20).